The chain runs to 269 residues: Bifunctional protein FolD (269 aa).

NADP(+) contacts are provided by residues 149 to 151 (GLG) and Val-215.

Belongs to the tetrahydrofolate dehydrogenase/cyclohydrolase family. In terms of assembly, homodimer.

It catalyses the reaction (6R)-5,10-methylene-5,6,7,8-tetrahydrofolate + NADP(+) = (6R)-5,10-methenyltetrahydrofolate + NADPH. The enzyme catalyses (6R)-5,10-methenyltetrahydrofolate + H2O = (6R)-10-formyltetrahydrofolate + H(+). It functions in the pathway one-carbon metabolism; tetrahydrofolate interconversion. In terms of biological role, catalyzes the oxidation of 5,10-methylenetetrahydrofolate to 5,10-methenyltetrahydrofolate and then the hydrolysis of 5,10-methenyltetrahydrofolate to 10-formyltetrahydrofolate. The chain is Bifunctional protein FolD from Mycoplasma pneumoniae (strain ATCC 29342 / M129 / Subtype 1) (Mycoplasmoides pneumoniae).